Reading from the N-terminus, the 549-residue chain is TBC1 domain family member 3I (549 aa).

The Rab-GAP TBC domain maps to 101-293 (GMPMNIRGPM…RLWDVYLVEG (193 aa)). S-palmitoyl cysteine attachment occurs at residues Cys-318 and Cys-325. Disordered regions lie at residues 350 to 443 (LTRK…QGGP) and 507 to 526 (AAPS…DEQQ). A compositionally biased stretch (low complexity) spans 398–417 (PRPIWSASPPRAPRSSTPCP).

Post-translationally, ubiquitinated by a CUL7-based E3 ligase, which leads to proteasomal degradation. In terms of processing, palmitoylation is required for membrane localization and protects TBC1D3 from ubiquitination.

The protein localises to the cell membrane. In terms of biological role, acts as a GTPase activating protein for RAB5. Does not act on RAB4 or RAB11. The polypeptide is TBC1 domain family member 3I (Homo sapiens (Human)).